We begin with the raw amino-acid sequence, 560 residues long: Oxygen-dependent choline dehydrogenase 1 (560 aa).

8 to 37 (DYIIIGAGSAGNVLATRLTEDPDVQVLLLE) is a binding site for FAD. His475 functions as the Proton acceptor in the catalytic mechanism.

The protein belongs to the GMC oxidoreductase family. FAD serves as cofactor.

It catalyses the reaction choline + A = betaine aldehyde + AH2. The enzyme catalyses betaine aldehyde + NAD(+) + H2O = glycine betaine + NADH + 2 H(+). It participates in amine and polyamine biosynthesis; betaine biosynthesis via choline pathway; betaine aldehyde from choline (cytochrome c reductase route): step 1/1. Its function is as follows. Involved in the biosynthesis of the osmoprotectant glycine betaine. Catalyzes the oxidation of choline to betaine aldehyde and betaine aldehyde to glycine betaine at the same rate. The chain is Oxygen-dependent choline dehydrogenase 1 from Chromohalobacter salexigens (strain ATCC BAA-138 / DSM 3043 / CIP 106854 / NCIMB 13768 / 1H11).